Consider the following 323-residue polypeptide: Iron-sulfur cluster transfer protein NUBPL (323 aa).

Residue 65–72 (AKGGVGKS) coordinates ATP.

This sequence belongs to the Mrp/NBP35 ATP-binding proteins family. Requires [4Fe-4S] cluster as cofactor.

It is found in the mitochondrion. Functionally, iron-sulfur cluster transfer protein involved in the assembly of the mitochondrial membrane respiratory chain NADH dehydrogenase (Complex I). May deliver one or more Fe-S clusters to complex I subunits. In Dictyostelium discoideum (Social amoeba), this protein is Iron-sulfur cluster transfer protein NUBPL (nubpl).